The primary structure comprises 1235 residues: Stress response protein NST1 (1235 aa).

A compositionally biased stretch (polar residues) spans 1–19; it reads MPSNSKRSMAPPTNVSKQI. Disordered stretches follow at residues 1-210, 300-369, 416-480, 517-848, 904-987, 1001-1023, and 1186-1235; these read MPSN…AHKV, FENG…LEDA, RMQR…EQRM, EELE…IPAM, GHTS…NQQE, LDDS…LPPG, and EPDN…TTGF. Low complexity predominate over residues 20-34; sequence SATSTSKKAPTKPTT. Residues 35–52 show a composition bias toward polar residues; it reads QNSIAGAKSTGSPETRTS. Composition is skewed to basic residues over residues 70-80 and 159-171; these read NRKKQKRRQKQ and RKGK…KSRS. Residues 179–189 are compositionally biased toward low complexity; it reads SSTSMSTPSAS. Over residues 340 to 367 the composition is skewed to acidic residues; that stretch reads LPDDDEDLDDDYDEDDEDDEPYSEDELE. Residues 426–437 show a composition bias toward low complexity; sequence AAASAAHQSMHA. Residues 445–475 show a composition bias toward acidic residues; the sequence is LDEEEYDDEEEEDYDSQDDEEYEEDEMDAMT. Residues 502–714 are a coiled coil; sequence AYREKIARER…QAAAVQAAKR (213 aa). Composition is skewed to basic and acidic residues over residues 517 to 539 and 549 to 697; these read EELE…EAQK and QAKE…REEQ. Residues 698-715 are compositionally biased toward low complexity; sequence AAQQAAAQAAAVQAAKRA. 4 stretches are compositionally biased toward polar residues: residues 759-772, 779-794, 831-843, and 924-959; these read QPSQ…SPRS, ISQT…STTI, PMQS…TNPG, and APQS…SQPI. Positions 1188–1198 are enriched in polar residues; the sequence is DNNSISSSTRG. Residues 1206 to 1221 show a composition bias toward low complexity; it reads GSPVPGSSLPTPGSGS. Positions 1222–1235 are enriched in polar residues; that stretch reads RQFATTNISPTTGF.

The protein belongs to the NST1 family.

The protein resides in the cytoplasm. In terms of biological role, may act as a negative regulator of salt tolerance. In Coccidioides immitis (strain RS) (Valley fever fungus), this protein is Stress response protein NST1 (NST1).